The following is a 79-amino-acid chain: Acyl carrier protein (79 aa).

The Carrier domain maps to 2–77 (SSIEDRVKKI…QAVDYIKKHL (76 aa)). Ser37 is subject to O-(pantetheine 4'-phosphoryl)serine.

It belongs to the acyl carrier protein (ACP) family. In terms of processing, 4'-phosphopantetheine is transferred from CoA to a specific serine of apo-ACP by AcpS. This modification is essential for activity because fatty acids are bound in thioester linkage to the sulfhydryl of the prosthetic group.

It is found in the cytoplasm. The protein operates within lipid metabolism; fatty acid biosynthesis. Functionally, carrier of the growing fatty acid chain in fatty acid biosynthesis. This is Acyl carrier protein from Halorhodospira halophila (strain DSM 244 / SL1) (Ectothiorhodospira halophila (strain DSM 244 / SL1)).